A 203-amino-acid polypeptide reads, in one-letter code: Imidazoleglycerol-phosphate dehydratase (203 aa).

This sequence belongs to the imidazoleglycerol-phosphate dehydratase family.

It localises to the cytoplasm. The enzyme catalyses D-erythro-1-(imidazol-4-yl)glycerol 3-phosphate = 3-(imidazol-4-yl)-2-oxopropyl phosphate + H2O. The protein operates within amino-acid biosynthesis; L-histidine biosynthesis; L-histidine from 5-phospho-alpha-D-ribose 1-diphosphate: step 6/9. The chain is Imidazoleglycerol-phosphate dehydratase from Synechococcus sp. (strain RCC307).